The following is a 150-amino-acid chain: Transcriptional repressor NrdR (150 aa).

A zinc finger spans residues 3–34; sequence CPFCAFADSKVVDSRPDKGGSTIRRRRECESC. Positions 49 to 139 constitute an ATP-cone domain; sequence PLVIKKDGRR…VYRSFKDITE (91 aa).

Belongs to the NrdR family. Zn(2+) serves as cofactor.

In terms of biological role, negatively regulates transcription of bacterial ribonucleotide reductase nrd genes and operons by binding to NrdR-boxes. The polypeptide is Transcriptional repressor NrdR (Geotalea uraniireducens (strain Rf4) (Geobacter uraniireducens)).